The following is a 279-amino-acid chain: Energy-coupling factor transporter ATP-binding protein EcfA1 (279 aa).

An ABC transporter domain is found at 5-240 (IELKKVTFNY…GDELLQLGLD (236 aa)). 40 to 47 (GHNGSGKS) provides a ligand contact to ATP.

Belongs to the ABC transporter superfamily. Energy-coupling factor EcfA family. Forms a stable energy-coupling factor (ECF) transporter complex composed of 2 membrane-embedded substrate-binding proteins (S component), 2 ATP-binding proteins (A component) and 2 transmembrane proteins (T component).

Its subcellular location is the cell membrane. Functionally, ATP-binding (A) component of a common energy-coupling factor (ECF) ABC-transporter complex. Unlike classic ABC transporters this ECF transporter provides the energy necessary to transport a number of different substrates. This is Energy-coupling factor transporter ATP-binding protein EcfA1 from Streptococcus pyogenes serotype M5 (strain Manfredo).